The primary structure comprises 380 residues: MRILADENIPVVDAFFADQGSIRRLPGRAIDRAALAEVDVLLVRSVTEVSRAALAGSPVRFVGTCTIGTDHLDLDYFAEAGIAWSSAPGCNARGVVDYVLGCLLAMAEVRGADLAERTYGVVGAGQVGGRLVEVLRGLGWKVLVCDPPRQAREPDGEFVSLERLLAEADVISLHTPLNRDGEHPTRHLLDEPRLAALRPGTWLVNASRGAVVDNQALRRLLEGGADLEVALDVWEGEPQADPELAAHCLIATPHIAGYSLEGKLRGTAQIYQAYCAWRGIAERVSLQDVLPETWLAGLQLNPGCDPAWALATLCRAVYDPRSDDAAFRRSLTGDSATRRAAFDALRKHYPPRREITGLRVATGGRVELQRVVRALGAQLV.

2 residues coordinate substrate: serine 45 and threonine 66. NAD(+) is bound by residues 126–127, aspartate 146, threonine 175, 206–208, and aspartate 232; these read QV and ASR. The active site involves arginine 208. Glutamate 237 is an active-site residue. Histidine 254 acts as the Proton donor in catalysis. Position 257 (glycine 257) interacts with NAD(+). Substrate is bound at residue tyrosine 258.

Belongs to the D-isomer specific 2-hydroxyacid dehydrogenase family. PdxB subfamily. Homodimer.

It is found in the cytoplasm. It carries out the reaction 4-phospho-D-erythronate + NAD(+) = (R)-3-hydroxy-2-oxo-4-phosphooxybutanoate + NADH + H(+). It participates in cofactor biosynthesis; pyridoxine 5'-phosphate biosynthesis; pyridoxine 5'-phosphate from D-erythrose 4-phosphate: step 2/5. Functionally, catalyzes the oxidation of erythronate-4-phosphate to 3-hydroxy-2-oxo-4-phosphonooxybutanoate. This is Erythronate-4-phosphate dehydrogenase from Pseudomonas aeruginosa (strain UCBPP-PA14).